Reading from the N-terminus, the 378-residue chain is Neutral protease 2 homolog ARB_04336 (378 aa).

A signal peptide spans 1–19 (MKFFTALAAVGALLAPAVA). Positions 20–186 (LPTPASEASH…DYFSKGLDKR (167 aa)) are excised as a propeptide. 2 cysteine pairs are disulfide-bonded: Cys192–Cys262 and Cys269–Cys287. His311 serves as a coordination point for Zn(2+). Residue Glu312 is part of the active site. 2 residues coordinate Zn(2+): His315 and Asp326.

Belongs to the peptidase M35 family. Requires Zn(2+) as cofactor.

The protein localises to the secreted. The catalysed reaction is Preferential cleavage of bonds with hydrophobic residues in P1'. Also 3-Asn-|-Gln-4 and 8-Gly-|-Ser-9 bonds in insulin B chain.. Functionally, secreted metalloproteinase that allows assimilation of proteinaceous substrates. Shows high activities on basic nuclear substrates such as histone and protamine. May be involved in virulence. The chain is Neutral protease 2 homolog ARB_04336 from Arthroderma benhamiae (strain ATCC MYA-4681 / CBS 112371) (Trichophyton mentagrophytes).